The primary structure comprises 137 residues: MGVLSEFKAFAVKGNVVDMAVGIIIGAAFGKIVSSFVGDVVMPPIGLLIGGVNFGDLAVTLKAAAGDTPAVVLAYGKFIQSIIDFVIIAFAIFMGVKVINRLKREEAVAPTLPPVPTKEEELLGEIRDLLKAQNNKP.

4 helical membrane passes run 9 to 29, 32 to 52, 54 to 74, and 79 to 99; these read AFAV…GAAF, IVSS…IGGV, FGDL…VVLA, and IQSI…VKVI.

It belongs to the MscL family. In terms of assembly, homopentamer.

It is found in the cell inner membrane. In terms of biological role, channel that opens in response to stretch forces in the membrane lipid bilayer. May participate in the regulation of osmotic pressure changes within the cell. The sequence is that of Large-conductance mechanosensitive channel from Pseudomonas fluorescens (strain ATCC BAA-477 / NRRL B-23932 / Pf-5).